A 306-amino-acid chain; its full sequence is tRNA-cytidine(32) 2-sulfurtransferase (306 aa).

The PP-loop motif signature appears at 44–49; the sequence is SGGKDS. Positions 119, 122, and 210 each coordinate [4Fe-4S] cluster.

The protein belongs to the TtcA family. In terms of assembly, homodimer. Requires Mg(2+) as cofactor. [4Fe-4S] cluster serves as cofactor.

The protein resides in the cytoplasm. It catalyses the reaction cytidine(32) in tRNA + S-sulfanyl-L-cysteinyl-[cysteine desulfurase] + AH2 + ATP = 2-thiocytidine(32) in tRNA + L-cysteinyl-[cysteine desulfurase] + A + AMP + diphosphate + H(+). It functions in the pathway tRNA modification. In terms of biological role, catalyzes the ATP-dependent 2-thiolation of cytidine in position 32 of tRNA, to form 2-thiocytidine (s(2)C32). The sulfur atoms are provided by the cysteine/cysteine desulfurase (IscS) system. This is tRNA-cytidine(32) 2-sulfurtransferase from Photorhabdus laumondii subsp. laumondii (strain DSM 15139 / CIP 105565 / TT01) (Photorhabdus luminescens subsp. laumondii).